The sequence spans 72 residues: Large ribosomal subunit protein eL40 (72 aa).

This sequence belongs to the eukaryotic ribosomal protein eL40 family.

This Nicotiana tabacum (Common tobacco) protein is Large ribosomal subunit protein eL40.